Reading from the N-terminus, the 874-residue chain is Alanine--tRNA ligase (874 aa).

Positions 562, 566, 665, and 669 each coordinate Zn(2+).

The protein belongs to the class-II aminoacyl-tRNA synthetase family. Requires Zn(2+) as cofactor.

Its subcellular location is the cytoplasm. The enzyme catalyses tRNA(Ala) + L-alanine + ATP = L-alanyl-tRNA(Ala) + AMP + diphosphate. In terms of biological role, catalyzes the attachment of alanine to tRNA(Ala) in a two-step reaction: alanine is first activated by ATP to form Ala-AMP and then transferred to the acceptor end of tRNA(Ala). Also edits incorrectly charged Ser-tRNA(Ala) and Gly-tRNA(Ala) via its editing domain. This Stutzerimonas stutzeri (strain A1501) (Pseudomonas stutzeri) protein is Alanine--tRNA ligase.